Reading from the N-terminus, the 331-residue chain is Ferrochelatase (331 aa).

Positions 187 and 286 each coordinate Fe cation.

This sequence belongs to the ferrochelatase family.

It localises to the cytoplasm. The catalysed reaction is heme b + 2 H(+) = protoporphyrin IX + Fe(2+). Its pathway is porphyrin-containing compound metabolism; protoheme biosynthesis; protoheme from protoporphyrin-IX: step 1/1. In terms of biological role, catalyzes the ferrous insertion into protoporphyrin IX. This Legionella pneumophila (strain Corby) protein is Ferrochelatase.